A 221-amino-acid polypeptide reads, in one-letter code: Imidazoleglycerol-phosphate dehydratase (221 aa).

This sequence belongs to the imidazoleglycerol-phosphate dehydratase family.

The enzyme catalyses D-erythro-1-(imidazol-4-yl)glycerol 3-phosphate = 3-(imidazol-4-yl)-2-oxopropyl phosphate + H2O. It functions in the pathway amino-acid biosynthesis; L-histidine biosynthesis; L-histidine from 5-phospho-alpha-D-ribose 1-diphosphate: step 6/9. This chain is Imidazoleglycerol-phosphate dehydratase (HIS3), found in Kluyveromyces marxianus (Yeast).